The chain runs to 369 residues: Probable peptidoglycan glycosyltransferase FtsW (369 aa).

Helical transmembrane passes span 11 to 31, 48 to 68, 77 to 97, 134 to 151, 154 to 174, 177 to 197, 265 to 285, and 306 to 326; these read LLSV…SSSV, NFIH…VPIY, LILC…SNHG, TSTI…KLLL, PDFG…FLIG, FLFL…LIYF, LGYL…FQGM, and ISLL…GILP.

This sequence belongs to the SEDS family. FtsW subfamily.

It is found in the cell inner membrane. It catalyses the reaction [GlcNAc-(1-&gt;4)-Mur2Ac(oyl-L-Ala-gamma-D-Glu-L-Lys-D-Ala-D-Ala)](n)-di-trans,octa-cis-undecaprenyl diphosphate + beta-D-GlcNAc-(1-&gt;4)-Mur2Ac(oyl-L-Ala-gamma-D-Glu-L-Lys-D-Ala-D-Ala)-di-trans,octa-cis-undecaprenyl diphosphate = [GlcNAc-(1-&gt;4)-Mur2Ac(oyl-L-Ala-gamma-D-Glu-L-Lys-D-Ala-D-Ala)](n+1)-di-trans,octa-cis-undecaprenyl diphosphate + di-trans,octa-cis-undecaprenyl diphosphate + H(+). It functions in the pathway cell wall biogenesis; peptidoglycan biosynthesis. Functionally, peptidoglycan polymerase that is essential for cell division. The chain is Probable peptidoglycan glycosyltransferase FtsW from Riesia pediculicola (strain USDA).